Consider the following 295-residue polypeptide: MASDLRPPEHQVAGHRASADKLGPLVDGEGLFYKPLQAGERGEHEAAFYAAFTAHPAVPPRVRGAFFPRFHGTRFLPAPASPGGAPYPHIVLDDLLAGLPSPCVADVKIGACTWPPRSPDPYVAKCLAKDRETTSALLGFRVSGVRVVDARGGAVWRPDRSELKGIDAAGVRRVLRRYVSTGGGDGLDCALAAAVYGGEGGVLAQLRELKAWFEEQTLYHFYSASILFGYDANAAAAAAPGGGSGGVRVKLVDFAHVDDGDGVIDHNFLGGLCSLIKFIGDIVAEVTEKASSDHS.

The segment at 1 to 21 (MASDLRPPEHQVAGHRASADK) is disordered.

This sequence belongs to the inositol phosphokinase (IPK) family.

The enzyme catalyses 1D-myo-inositol 1,4,5-trisphosphate + 2 ATP = 1D-myo-inositol 1,3,4,5,6-pentakisphosphate + 2 ADP + 2 H(+). It carries out the reaction 1D-myo-inositol 1,3,4,6-tetrakisphosphate + ATP = 1D-myo-inositol 1,3,4,5,6-pentakisphosphate + ADP + H(+). In terms of biological role, inositol phosphate kinase with a broad substrate specificity. Phosphorylates inositol 1,4,5-trisphosphate (Ins(1,4,5)P3), inositol 1,4,5,6-tetrakisphosphate (Ins(1,4,5,6)P4), inositol 1,3,4,5-tetrakisphosphate (Ins(1,3,4,5)P4), inositol 1,3,4,6-tetrakisphosphate (Ins(1,3,4,6)P4) and inositol 1,2,3,4,6-pentakisphosphate (Ins(1,2,3,4,6)P5) but not inositol 1,4-bisphosphate (Ins(1,4)P2), inositol 1,3,4-trisphosphate (Ins(1,3,4)P3), inositol 1,2,6-trisphosphate (Ins(1,2,6)P3), inositol 3,4,5,6-tetrakisphosphate (Ins(3,4,5,6)P4), inositol 1,3,4,5,6-pentakisphosphate (Ins(1,3,4,5,6)P5), inositol 1,2,4,5,6-pentakisphosphate (Ins(1,2,4,5,6)P5) or inositol hexakisphosphate (InsP6). Regulates pollen and root development probably through the regulation of InsP3-mediated calcium accumulation. This Oryza sativa subsp. indica (Rice) protein is Inositol polyphosphate multikinase IPK2.